The chain runs to 205 residues: MNTVLSTVLFAIGAYLIGSISFAVVVSKCFRLADPRSYGSKNPGATNVLRSGNKKAAILTLLGDGAKGFVAVWLVKHFGPDYGVQESGVALVAIAVFLGHLWPIFFRFVGGKGVATALGILLALNGWLGLATLITWLVIAYAFRYSSFAALIAAIFAPFYYALMFGPDAILLAVVAMSVLLIYRHGKNIGNLLAGKESRIGSKKK.

A run of 5 helical transmembrane segments spans residues 6 to 26 (STVL…AVVV), 55 to 75 (KAAI…VWLV), 89 to 109 (VALV…FRFV), 120 to 140 (ILLA…LVIA), and 162 to 182 (ALMF…VLLI).

The protein belongs to the PlsY family. Probably interacts with PlsX.

The protein localises to the cell inner membrane. It carries out the reaction an acyl phosphate + sn-glycerol 3-phosphate = a 1-acyl-sn-glycero-3-phosphate + phosphate. Its pathway is lipid metabolism; phospholipid metabolism. Its function is as follows. Catalyzes the transfer of an acyl group from acyl-phosphate (acyl-PO(4)) to glycerol-3-phosphate (G3P) to form lysophosphatidic acid (LPA). This enzyme utilizes acyl-phosphate as fatty acyl donor, but not acyl-CoA or acyl-ACP. The protein is Glycerol-3-phosphate acyltransferase of Herminiimonas arsenicoxydans.